Reading from the N-terminus, the 292-residue chain is Feruloyl esterase B (292 aa).

An N-terminal signal peptide occupies residues 1–18; sequence MLPRTLLGLALTAATGLC. N-linked (GlcNAc...) asparagine glycosylation is found at Asn88, Asn117, Asn179, and Asn245.

This sequence belongs to the carbohydrate esterase 1 (CE1) family. Feruloyl esterase type B subfamily.

The protein resides in the secreted. The catalysed reaction is feruloyl-polysaccharide + H2O = ferulate + polysaccharide.. Its function is as follows. Involved in degradation of plant cell walls. Hydrolyzes of the feruloyl-arabinose ester bond in arabinoxylans as well as the feruloyl-galactose and feruloyl-arabinose ester bonds in pectin. This chain is Feruloyl esterase B (fae-1), found in Neurospora crassa (strain ATCC 24698 / 74-OR23-1A / CBS 708.71 / DSM 1257 / FGSC 987).